Consider the following 253-residue polypeptide: Triosephosphate isomerase (253 aa).

8–10 contacts substrate; it reads NWK. The active-site Electrophile is His93. Residue Glu165 is the Proton acceptor of the active site. Residues Gly171, Ser210, and 231-232 contribute to the substrate site; that span reads GG.

The protein belongs to the triosephosphate isomerase family. As to quaternary structure, homodimer.

The protein resides in the cytoplasm. It carries out the reaction D-glyceraldehyde 3-phosphate = dihydroxyacetone phosphate. It functions in the pathway carbohydrate biosynthesis; gluconeogenesis. Its pathway is carbohydrate degradation; glycolysis; D-glyceraldehyde 3-phosphate from glycerone phosphate: step 1/1. In terms of biological role, involved in the gluconeogenesis. Catalyzes stereospecifically the conversion of dihydroxyacetone phosphate (DHAP) to D-glyceraldehyde-3-phosphate (G3P). In Francisella philomiragia subsp. philomiragia (strain ATCC 25017 / CCUG 19701 / FSC 153 / O#319-036), this protein is Triosephosphate isomerase.